The sequence spans 463 residues: MENFYNETEPTEPRGGVDPLRVVTAAEDVPAPVGGVSVRALTGCVLCALIVSTLLGNTLVCAAVIKFRHLRSKVTNAFVVSLAVSDLFVAVLVMPWRAVSEVAGVWLFGRFCDTWVAFDIMCSTASILNLCVISMDRYWAISNPFRYERRMTRRFAFLMIAVAWTLSVLISFIPVQLNWHRADNNSSAHEQGDCNASLNRTYAISSSLISFYIPVLIMVGTYTRIFRIAQTQIRRISSLERAAGQRAQNQSHRASTHDESALKTSFKRETKVLKTLSVIMGVFVFCWLPFFVLNCVVPFCDVDKVGEPPCVSDTTFNIFVWFGWANSSLNPVIYAFNADFRKAFTTILGCSKFCSSSAVQAVDFSNELVSYHHDTTLQKEPVPGPGAHRLVAPLPQNRGDAGPNFDKVSVVSDDSRADRNLLLPAILQCDCEAEISLDMVPFGSSGPADSFLIPGQIQDLGDL.

Residues 1–39 lie on the Extracellular side of the membrane; it reads MENFYNETEPTEPRGGVDPLRVVTAAEDVPAPVGGVSVR. Residue N6 is glycosylated (N-linked (GlcNAc...) asparagine). Residues 40 to 65 traverse the membrane as a helical segment; sequence ALTGCVLCALIVSTLLGNTLVCAAVI. At 66–76 the chain is on the cytoplasmic side; sequence KFRHLRSKVTN. Residues 77–103 form a helical membrane-spanning segment; it reads AFVVSLAVSDLFVAVLVMPWRAVSEVA. The Extracellular portion of the chain corresponds to 104 to 112; that stretch reads GVWLFGRFC. Cysteines 112 and 194 form a disulfide. The helical transmembrane segment at 113-135 threads the bilayer; sequence DTWVAFDIMCSTASILNLCVISM. Over 136 to 154 the chain is Cytoplasmic; sequence DRYWAISNPFRYERRMTRR. A helical membrane pass occupies residues 155-180; sequence FAFLMIAVAWTLSVLISFIPVQLNWH. The Extracellular portion of the chain corresponds to 181–198; sequence RADNNSSAHEQGDCNASL. Residues 199–223 form a helical membrane-spanning segment; sequence NRTYAISSSLISFYIPVLIMVGTYT. Residues 224–273 lie on the Cytoplasmic side of the membrane; that stretch reads RIFRIAQTQIRRISSLERAAGQRAQNQSHRASTHDESALKTSFKRETKVL. A helical transmembrane segment spans residues 274–301; sequence KTLSVIMGVFVFCWLPFFVLNCVVPFCD. The Extracellular portion of the chain corresponds to 302–315; it reads VDKVGEPPCVSDTT. A helical transmembrane segment spans residues 316-337; that stretch reads FNIFVWFGWANSSLNPVIYAFN. Residues 338–463 lie on the Cytoplasmic side of the membrane; the sequence is ADFRKAFTTI…PGQIQDLGDL (126 aa).

Belongs to the G-protein coupled receptor 1 family.

The protein localises to the cell membrane. Receptor for dopamine. The protein is D(5)-like dopamine receptor (dl) of Takifugu rubripes (Japanese pufferfish).